A 216-amino-acid polypeptide reads, in one-letter code: Regulator of G-protein signaling 19 (216 aa).

Positions 1–19 are enriched in basic and acidic residues; it reads MPTPHEAEKQHTGPEEADR. The interval 1–30 is disordered; the sequence is MPTPHEAEKQHTGPEEADRPPSMSSHDAAP. 2 positions are modified to phosphoserine: Ser-24 and Ser-97. The RGS domain occupies 90 to 206; it reads SFDKLMHSPT…LTSPTYRSLL (117 aa). Ser-151 carries the post-translational modification Phosphoserine; by MAPK1 and MAPK3. Residues 207 to 216 form an interaction with GIPC region; it reads LQGAPQSSEA.

In terms of assembly, interacts with GIPC PDZ domain. Interacts with GNAO1. Fatty acylated. Heavily palmitoylated in the cysteine string motif. In terms of processing, phosphorylated, mainly on serine residues.

The protein resides in the membrane. Its function is as follows. Inhibits signal transduction by increasing the GTPase activity of G protein alpha subunits thereby driving them into their inactive GDP-bound form. Binds to G-alpha subfamily 1 members, with the order G(i)a3 &gt; G(i)a1 &gt; G(o)a &gt;&gt; G(z)a/G(i)a2. Activity on G(z)-alpha is inhibited by phosphorylation and palmitoylation of the G-protein. The chain is Regulator of G-protein signaling 19 (Rgs19) from Mus musculus (Mouse).